We begin with the raw amino-acid sequence, 432 residues long: Adenylosuccinate synthetase (432 aa).

Residues Gly13–Lys19 and Gly41–Thr43 contribute to the GTP site. Asp14 functions as the Proton acceptor in the catalytic mechanism. The Mg(2+) site is built by Asp14 and Gly41. Residues Asp14–Lys17, Asn39–His42, Thr130, Arg144, Gln225, Thr240, and Arg304 each bind IMP. Residue His42 is the Proton donor of the active site. Ala300–Arg306 contributes to the substrate binding site. GTP contacts are provided by residues Arg306, Lys332–Asp334, and Ser415–Gly417.

It belongs to the adenylosuccinate synthetase family. As to quaternary structure, homodimer. The cofactor is Mg(2+).

The protein resides in the cytoplasm. It catalyses the reaction IMP + L-aspartate + GTP = N(6)-(1,2-dicarboxyethyl)-AMP + GDP + phosphate + 2 H(+). It participates in purine metabolism; AMP biosynthesis via de novo pathway; AMP from IMP: step 1/2. Plays an important role in the de novo pathway of purine nucleotide biosynthesis. Catalyzes the first committed step in the biosynthesis of AMP from IMP. The chain is Adenylosuccinate synthetase from Alteromonas mediterranea (strain DSM 17117 / CIP 110805 / LMG 28347 / Deep ecotype).